A 1075-amino-acid chain; its full sequence is Protein EXPORTIN 1A (1075 aa).

The Importin N-terminal domain occupies 37 to 103; it reads ADQILRDLQA…KNYISEVIVQ (67 aa). HEAT repeat units lie at residues 91-130, 135-171, 232-267, 336-373, 388-425, 474-513, 563-600, 612-649, 682-719, 756-793, 798-835, and 894-934; these read DGMK…QIVK, AKWT…EVFD, IFES…LNFG, SLLL…ELFD, MGLQ…LMIN, DTEK…SMAE, KFLK…KCKR, PFVS…AESD, LKDQ…IFLD, RETL…DYAR, ARES…CTLE, and ETGL…VLTD.

Belongs to the exportin family. In terms of assembly, interacts with RAN1. As to expression, expressed ubiquitously, with higher levels in stems, inflorescences and roots. Present in mature pollen grains, unpollinated pistils, and 2-week-old seedlings.

It is found in the nucleus. The protein resides in the nuclear pore complex. It localises to the nucleus membrane. Functionally, receptor for the leucine-rich nuclear export signal (NES). Binds cooperatively to the NES on its target protein and to the small GTPase Ran in its active GTP-bound form. Required for the maternal-to-embryonic transition and during gametophyte development. Involved in heat-induced oxidative stress basal resistance. The sequence is that of Protein EXPORTIN 1A from Arabidopsis thaliana (Mouse-ear cress).